Here is a 237-residue protein sequence, read N- to C-terminus: Ribitol-5-phosphate cytidylyltransferase (237 aa).

Residues 7–10 (LAGG) and 80–86 (GEDRNET) contribute to the CTP site.

Belongs to the IspD/TarI cytidylyltransferase family. TarI subfamily.

The enzyme catalyses D-ribitol 5-phosphate + CTP + H(+) = CDP-L-ribitol + diphosphate. Its pathway is cell wall biogenesis; poly(ribitol phosphate) teichoic acid biosynthesis. Its function is as follows. Catalyzes the transfer of the cytidylyl group of CTP to D-ribitol 5-phosphate. The sequence is that of Ribitol-5-phosphate cytidylyltransferase from Listeria innocua serovar 6a (strain ATCC BAA-680 / CLIP 11262).